A 114-amino-acid chain; its full sequence is Large ribosomal subunit protein bL17 (114 aa).

The protein belongs to the bacterial ribosomal protein bL17 family. In terms of assembly, part of the 50S ribosomal subunit. Contacts protein L32.

The sequence is that of Large ribosomal subunit protein bL17 from Halothermothrix orenii (strain H 168 / OCM 544 / DSM 9562).